A 414-amino-acid chain; its full sequence is Phospholipid-transporting ATPase accessory subunit LEM3 (414 aa).

The required for localization to the plasma membrane stretch occupies residues 1–50 (MVNFDLGQVGEVFRRKDKGAIVSGDNPEEEEDVDASEFEEDEVKPVRTKN). At 1-74 (MVNFDLGQVG…AINPVLTPRT (74 aa)) the chain is on the cytoplasmic side. Positions 20–52 (AIVSGDNPEEEEDVDASEFEEDEVKPVRTKNRR) are disordered. The span at 26-42 (NPEEEEDVDASEFEEDE) shows a compositional bias: acidic residues. Serine 36 carries the phosphoserine modification. Residues 75–95 (VLPLYLLIAVVFVIVGGCILA) traverse the membrane as a helical segment. Over 96 to 372 (QNSKVDEVTI…HGSHLGGRNP (277 aa)) the chain is Extracellular. 2 cysteine pairs are disulfide-bonded: cysteine 110/cysteine 159 and cysteine 216/cysteine 231. The N-linked (GlcNAc...) asparagine glycan is linked to asparagine 113. Asparagine 240, asparagine 256, asparagine 279, asparagine 298, and asparagine 332 each carry an N-linked (GlcNAc...) asparagine glycan. Residues 373–393 (FLGIVYLIGGCICAAMALILL) form a helical membrane-spanning segment. Topologically, residues 394-414 (TFWLFGGRKIADASSLSWNMK) are cytoplasmic. The tract at residues 400-414 (GRKIADASSLSWNMK) is required for localization to the plasma membrane.

It belongs to the CDC50/LEM3 family. Component of a flippase complex consisting of DNF1 or DNF2 and LEM3. Interacts with DNF1; the interaction is direct and required for their mutual export from the endoplasmic reticulum. Interacts with DNF2; the interaction is direct and required for their mutual export from the endoplasmic reticulum.

Its subcellular location is the cell membrane. Functionally, accessory component of a P4-ATPase flippase complex which catalyzes the hydrolysis of ATP coupled to the transport of glucosylceramide, phosphatidylcholine, phosphatidylethanolamine, and small amounts of phosphatidylserine from the lumenal to the cytosolic leaflet of the cell membrane and ensures the maintenance of asymmetric distribution of phospholipids. Contributes to substrate binding and specificity of the P4-ATPase catalytic subunit. In Saccharomyces cerevisiae (strain ATCC 204508 / S288c) (Baker's yeast), this protein is Phospholipid-transporting ATPase accessory subunit LEM3.